We begin with the raw amino-acid sequence, 153 residues long: 6,7-dimethyl-8-ribityllumazine synthase (153 aa).

5-amino-6-(D-ribitylamino)uracil is bound by residues phenylalanine 22, 56-58, and 80-82; these read AFE and TVI. 85–86 provides a ligand contact to (2S)-2-hydroxy-3-oxobutyl phosphate; sequence AT. Histidine 88 acts as the Proton donor in catalysis. Position 113 (phenylalanine 113) interacts with 5-amino-6-(D-ribitylamino)uracil. Arginine 127 contributes to the (2S)-2-hydroxy-3-oxobutyl phosphate binding site.

Belongs to the DMRL synthase family.

It carries out the reaction (2S)-2-hydroxy-3-oxobutyl phosphate + 5-amino-6-(D-ribitylamino)uracil = 6,7-dimethyl-8-(1-D-ribityl)lumazine + phosphate + 2 H2O + H(+). It participates in cofactor biosynthesis; riboflavin biosynthesis; riboflavin from 2-hydroxy-3-oxobutyl phosphate and 5-amino-6-(D-ribitylamino)uracil: step 1/2. Catalyzes the formation of 6,7-dimethyl-8-ribityllumazine by condensation of 5-amino-6-(D-ribitylamino)uracil with 3,4-dihydroxy-2-butanone 4-phosphate. This is the penultimate step in the biosynthesis of riboflavin. The chain is 6,7-dimethyl-8-ribityllumazine synthase from Clostridium perfringens (strain ATCC 13124 / DSM 756 / JCM 1290 / NCIMB 6125 / NCTC 8237 / Type A).